The primary structure comprises 104 residues: Large ribosomal subunit protein uL24 (104 aa).

The protein belongs to the universal ribosomal protein uL24 family. In terms of assembly, part of the 50S ribosomal subunit.

Its function is as follows. One of two assembly initiator proteins, it binds directly to the 5'-end of the 23S rRNA, where it nucleates assembly of the 50S subunit. One of the proteins that surrounds the polypeptide exit tunnel on the outside of the subunit. The chain is Large ribosomal subunit protein uL24 from Erwinia tasmaniensis (strain DSM 17950 / CFBP 7177 / CIP 109463 / NCPPB 4357 / Et1/99).